The sequence spans 216 residues: MSELKIKAAKAAIAYIEDDMVIGVGTGSTVNFFIKELAAIKHKIEACVASSKATEALLRAEGIPVIDLNSVQDLPIYVDGADEVNERGEMIKGGGGALTREKIVANVATQFICIVDESKVVKRLGEFPVAVEVIPMARSFVARQIVKLGGDPEYREGFITDNGNIILDVFNLNFSTPMALEDSLNVIPGVVENGVFAKRLADKVLVASASGVNNLK.

Residues threonine 26 to threonine 29, aspartate 79 to aspartate 82, and lysine 92 to glycine 95 contribute to the substrate site. The active-site Proton acceptor is glutamate 101. Substrate is bound at residue lysine 119.

The protein belongs to the ribose 5-phosphate isomerase family. In terms of assembly, homodimer.

The catalysed reaction is aldehydo-D-ribose 5-phosphate = D-ribulose 5-phosphate. It participates in carbohydrate degradation; pentose phosphate pathway; D-ribose 5-phosphate from D-ribulose 5-phosphate (non-oxidative stage): step 1/1. Catalyzes the reversible conversion of ribose-5-phosphate to ribulose 5-phosphate. In Legionella pneumophila (strain Lens), this protein is Ribose-5-phosphate isomerase A.